The chain runs to 393 residues: Elongation factor Tu (393 aa).

Residues 6 to 204 (KPHINVGTIG…ALEKIELPVR (199 aa)) enclose the tr-type G domain. Residues 15–22 (GHVDHGKT) are G1. Residue 15 to 22 (GHVDHGKT) coordinates GTP. Threonine 22 is a Mg(2+) binding site. Positions 58 to 62 (GITIS) are G2. The segment at 79–82 (DCPG) is G3. Residues 79-83 (DCPGH) and 134-137 (NKCD) each bind GTP. The tract at residues 134 to 137 (NKCD) is G4. A G5 region spans residues 172-174 (SAV).

This sequence belongs to the TRAFAC class translation factor GTPase superfamily. Classic translation factor GTPase family. EF-Tu/EF-1A subfamily. As to quaternary structure, monomer.

It is found in the cytoplasm. The catalysed reaction is GTP + H2O = GDP + phosphate + H(+). In terms of biological role, GTP hydrolase that promotes the GTP-dependent binding of aminoacyl-tRNA to the A-site of ribosomes during protein biosynthesis. The protein is Elongation factor Tu of Anaplasma marginale (strain St. Maries).